The chain runs to 570 residues: MPARISRATYAQMFGPTVGDKVRLADTDLIIEVERDLTTYGEEVKFGGGKVIRDGMGQSQLSRAEGAMDTVITNALILDHSGIYKADIGLLDGRIALIGKAGNPDTQPGISIIIGPGTEIIAGEGKIVTAGGIDTHVHFISPQQVDEALNAGITCMVGGGTGPAHGTLATTCTPGPWHIARLIQSFDGLPMNIGVFGKGNASLPGALEEMVRAGACGLKLHEDWGCTPAAIDNCLSVADHFDVQVAIHTDTLNEGGFVEDTLNAFKGRTIHSFHTEGAGGGHAPDIIRVCQYPNVLPASTNPTRPYTVNTIAEHLDMLMVCHHLSPAIPEDIAFAESRIRKETIAAEDILHDMGAFSIISSDSQAMGRVGEMIIRCWQTADKMKKQRGSLPDDRPGNDNYRARRYIAKYTINPAIAHGMAHEIGSVEVGKRADLVLWNSAFFGVKPDMVLLGGWIATAPMGDANGSIPTPQPMHTRPMFGSFGKALTNTSITFVSQAAMDEGLREKIGVDKQLVAVVNTRGGIGKHSMILNNAMPQMEVDPETYEVRADGELLTCEPVDVVPMAQRYFLF.

Residues 131 to 570 enclose the Urease domain; the sequence is GGIDTHVHFI…VPMAQRYFLF (440 aa). Residues H136, H138, and K219 each contribute to the Ni(2+) site. K219 is modified (N6-carboxylysine). H221 serves as a coordination point for substrate. Ni(2+) is bound by residues H248 and H274. H322 (proton donor) is an active-site residue. A Ni(2+)-binding site is contributed by D362.

The protein belongs to the metallo-dependent hydrolases superfamily. Urease alpha subunit family. As to quaternary structure, heterotrimer of UreA (gamma), UreB (beta) and UreC (alpha) subunits. Three heterotrimers associate to form the active enzyme. Requires Ni cation as cofactor. Post-translationally, carboxylation allows a single lysine to coordinate two nickel ions.

Its subcellular location is the cytoplasm. It carries out the reaction urea + 2 H2O + H(+) = hydrogencarbonate + 2 NH4(+). The protein operates within nitrogen metabolism; urea degradation; CO(2) and NH(3) from urea (urease route): step 1/1. This Brucella melitensis biotype 1 (strain ATCC 23456 / CCUG 17765 / NCTC 10094 / 16M) protein is Urease subunit alpha 1.